The following is a 664-amino-acid chain: Trifunctional UDP-glucose 4,6-dehydratase/UDP-4-keto-6-deoxy-D-glucose 3,5-epimerase/UDP-4-keto-L-rhamnose-reductase RHM3 (664 aa).

13-19 serves as a coordination point for NAD(+); that stretch reads GAAGFIA. T132 is a binding site for substrate. Catalysis depends on D133, which acts as the Proton donor. Catalysis depends on proton acceptor residues E134 and Y159. 386-392 is a binding site for NADP(+); it reads GKTGWLG.

It in the N-terminal section; belongs to the NAD(P)-dependent epimerase/dehydratase family. dTDP-glucose dehydratase subfamily. The protein in the C-terminal section; belongs to the dTDP-4-dehydrorhamnose reductase family. It depends on NAD(+) as a cofactor. NADP(+) serves as cofactor. In terms of tissue distribution, expressed in roots, stems, seedlings, and siliques. Lower expression in inflorescence tips, and leaves.

The catalysed reaction is UDP-alpha-D-glucose = UDP-4-dehydro-6-deoxy-alpha-D-glucose + H2O. It functions in the pathway carbohydrate biosynthesis. In terms of biological role, trifunctional enzyme involved in UDP-beta-L-rhamnose biosynthesis, a precursor of the primary cell wall components rhamnogalacturonan I (RG-I) and rhamnogalacturonan II (RG-II). Catalyzes the dehydration of UDP-glucose to form UDP-4-dehydro-6-deoxy-D-glucose followed by the epimerization of the C3' and C5' positions of UDP-4-dehydro-6-deoxy-D-glucose to form UDP-4-keto-beta-L-rhamnose and the reduction of UDP-4-keto-beta-L-rhamnose to yield UDP-beta-L-rhamnose. The protein is Trifunctional UDP-glucose 4,6-dehydratase/UDP-4-keto-6-deoxy-D-glucose 3,5-epimerase/UDP-4-keto-L-rhamnose-reductase RHM3 of Arabidopsis thaliana (Mouse-ear cress).